The chain runs to 388 residues: Galactokinase (388 aa).

Glutamate 33–aspartate 36 is a binding site for substrate. Residues serine 67 and glycine 124–serine 130 each bind ATP. Positions 130 and 162 each coordinate Mg(2+). Residue aspartate 174 is the Proton acceptor of the active site. Substrate is bound at residue tyrosine 224.

The protein belongs to the GHMP kinase family. GalK subfamily.

It is found in the cytoplasm. The enzyme catalyses alpha-D-galactose + ATP = alpha-D-galactose 1-phosphate + ADP + H(+). It functions in the pathway carbohydrate metabolism; galactose metabolism. In terms of biological role, catalyzes the transfer of the gamma-phosphate of ATP to D-galactose to form alpha-D-galactose-1-phosphate (Gal-1-P). This is Galactokinase from Streptococcus thermophilus.